Here is a 122-residue protein sequence, read N- to C-terminus: Large ribosomal subunit protein uL14 (122 aa).

Belongs to the universal ribosomal protein uL14 family. Part of the 50S ribosomal subunit. Forms a cluster with proteins L3 and L19. In the 70S ribosome, L14 and L19 interact and together make contacts with the 16S rRNA in bridges B5 and B8.

Functionally, binds to 23S rRNA. Forms part of two intersubunit bridges in the 70S ribosome. The protein is Large ribosomal subunit protein uL14 of Thermobifida fusca (strain YX).